Here is a 223-residue protein sequence, read N- to C-terminus: Ras-related protein Rab-32 (223 aa).

N-acetylalanine is present on alanine 2. Residues valine 34, glycine 35, lysine 36, threonine 37, serine 38, serine 49, glutamine 50, tyrosine 52, and threonine 55 each coordinate GTP. Threonine 37 provides a ligand contact to Mg(2+). A Switch 1 motif is present at residues 46–60 (QLFSQHYRATIGVDF). Threonine 55 is a Mg(2+) binding site. Serine 69 is modified (phosphoserine). Aspartate 79 lines the Mg(2+) pocket. Glycine 82, asparagine 141, lysine 142, aspartate 144, alanine 173, and lysine 174 together coordinate GTP. Residues 82–95 (GQERFGNMTRVYYK) carry the Switch 2 motif. A PKA-RII subunit binding domain region spans residues 176-195 (NINIDEATRFLVENMLANQQ). S-geranylgeranyl cysteine attachment occurs at residues cysteine 222 and cysteine 223.

This sequence belongs to the small GTPase superfamily. Rab family. Interacts with ANKRD27. A decreased interaction with ANKRD27 seen in the presence of SGSM2. Interacts with LRRK2 (via N-terminus); this interaction results in stimulation of RAB10 phosphorylation by LRRK2. Mg(2+) serves as cofactor. As to expression, widely expressed with highest levels in liver. Strong expression also found in melanocyte, platelet, mast cell and fibroblast cell lines.

Its subcellular location is the mitochondrion. It localises to the mitochondrion outer membrane. The protein resides in the cytoplasmic vesicle. It is found in the phagosome. The protein localises to the phagosome membrane. Its subcellular location is the melanosome. It localises to the melanosome membrane. It carries out the reaction GTP + H2O = GDP + phosphate + H(+). With respect to regulation, regulated by guanine the nucleotide exchange factor (GEF) BLOC-3 complex composed of HPS1 and HPS4 which promote the exchange of bound GDP for free GTP. Regulated by the GTPase activating protein (GAP) SGSM2/RUTBC1 which increases the GTP hydrolysis activity. Inhibited by GDP dissociation inhibitors (GDIs) which prevent Rab-GDP dissociation. In terms of biological role, the small GTPases Rab are key regulators of intracellular membrane trafficking, from the formation of transport vesicles to their fusion with membranes. Rabs cycle between an inactive GDP-bound form and an active GTP-bound form that is able to recruit to membranes different set of downstream effectors directly responsible for vesicle formation, movement, tethering and fusion. Also acts as an A-kinase anchoring protein by binding to the type II regulatory subunit of protein kinase A and anchoring it to the mitochondrion. Also involved in synchronization of mitochondrial fission. Plays a role in the maturation of phagosomes that engulf pathogens, such as S.aureus and M.tuberculosis. Plays an important role in the control of melanin production and melanosome biogenesis. In concert with RAB38, regulates the proper trafficking of melanogenic enzymes TYR, TYRP1 and DCT/TYRP2 to melanosomes in melanocytes. Stimulates phosphorylation of RAB10 'Thr-73' by LRRK2. The chain is Ras-related protein Rab-32 from Mus musculus (Mouse).